The primary structure comprises 544 residues: Chromatin assembly factor 1 subunit A (544 aa).

Residues 1-22 show a composition bias toward polar residues; it reads MNSESVDSDVAASTSNKGNELC. 3 disordered regions span residues 1–52, 67–117, and 138–160; these read MNSE…EADE, IYNG…REQE, and QEQQ…AQRL. Positions 23–35 are enriched in low complexity; that stretch reads SSSTDITSLSVSS. The segment covering 36 to 47 has biased composition (polar residues); the sequence is PNESVIHSSHSA. Residues 56–170 form an interaction with DNA and pcn1/PCNA region; sequence KLSYEGNRKK…RQEQILNKER (115 aa). Positions 74 to 117 are enriched in basic and acidic residues; that stretch reads AGKEKKLQKQRAQEERIRQKEAERLKREKERQQREQEKKLREQE. Residues 76–176 adopt a coiled-coil conformation; it reads KEKKLQKQRA…NKERQQLKLN (101 aa). Positions 172–179 match the PCNA-interaction protein (PIP box) motif; sequence QLKLNNFF. Positions 325–396 are interaction with histones H3/H4; it reads SNVLLNPWLE…DKDSVNASNT (72 aa). Acidic residues predominate over residues 351–388; the sequence is DEEDDGEDLESEDEEVDNSDDIVEDGDNAFVDDEDDDK. The segment at 351–400 is disordered; sequence DEEDDGEDLESEDEEVDNSDDIVEDGDNAFVDDEDDDKDSVNASNTHRSS.

This sequence belongs to the RLF2 family. In terms of assembly, component of chromatin assembly factor 1 (CAF-1), composed of pcf1, pcf2 and pcf3. Interacts (via PIP motif) with pcn1/PCNA; the interaction is direct and occurs during S-phase. Interacts with swi6 at the G1/S-phase transition and early S-phase, but not in the G2 phase. The CAF-1 complex interacts with histone H3/H4 dimers.

The protein resides in the nucleus. In terms of biological role, acts as a component of the histone chaperone complex chromatin assembly factor 1 (CAF-1), which assembles histone octamers onto DNA during replication and repair. CAF-1 performs the first step of the nucleosome assembly process, bringing newly synthesized histones H3 and H4 to replicating DNA; histones H2A/H2B can bind to this chromatin precursor subsequent to DNA replication to complete the histone octamer. Plays a role in the maintenance of heterochromatin. The chain is Chromatin assembly factor 1 subunit A from Schizosaccharomyces pombe (strain 972 / ATCC 24843) (Fission yeast).